The chain runs to 530 residues: Autoinducer-2 kinase (530 aa).

This sequence belongs to the FGGY kinase family.

It is found in the cytoplasm. The enzyme catalyses (S)-4,5-dihydroxypentane-2,3-dione + ATP = (2S)-2-hydroxy-3,4-dioxopentyl phosphate + ADP + H(+). Functionally, catalyzes the phosphorylation of autoinducer-2 (AI-2) to phospho-AI-2, which subsequently inactivates the transcriptional regulator LsrR and leads to the transcription of the lsr operon. Phosphorylates the ring-open form of (S)-4,5-dihydroxypentane-2,3-dione (DPD), which is the precursor to all AI-2 signaling molecules, at the C5 position. This is Autoinducer-2 kinase from Salmonella paratyphi A (strain ATCC 9150 / SARB42).